The following is a 297-amino-acid chain: Probable tyrosine phosphatase protein J2 (297 aa).

The 266-residue stretch at 21-286 (DSLSCIIQEY…VFCYHLIHAY (266 aa)) folds into the Tyrosine-protein phosphatase domain. The active-site Phosphocysteine intermediate is cysteine 227.

The protein belongs to the protein-tyrosine phosphatase family.

It catalyses the reaction O-phospho-L-tyrosyl-[protein] + H2O = L-tyrosyl-[protein] + phosphate. In Microplitis demolitor (Parasitoid wasp), this protein is Probable tyrosine phosphatase protein J2 (J3).